The following is a 674-amino-acid chain: tRNA-guanine(15) transglycosylase (674 aa).

Aspartate 90 (nucleophile) is an active-site residue. 2 residues coordinate substrate: aspartate 125 and alanine 192. Zn(2+) contacts are provided by cysteine 275, cysteine 277, and cysteine 280. The PUA domain occupies 596-671; it reads HNRVVVSEDS…QAIKTRKWKK (76 aa).

The protein belongs to the archaeosine tRNA-ribosyltransferase family. Requires Zn(2+) as cofactor.

The catalysed reaction is guanosine(15) in tRNA + 7-cyano-7-deazaguanine = 7-cyano-7-carbaguanosine(15) in tRNA + guanine. It functions in the pathway tRNA modification; archaeosine-tRNA biosynthesis. In terms of biological role, exchanges the guanine residue with 7-cyano-7-deazaguanine (preQ0) at position 15 in the dihydrouridine loop (D-loop) of archaeal tRNAs. This is tRNA-guanine(15) transglycosylase from Methanosphaera stadtmanae (strain ATCC 43021 / DSM 3091 / JCM 11832 / MCB-3).